The sequence spans 397 residues: Succinate--CoA ligase [ADP-forming] subunit beta (397 aa).

An ATP-grasp domain is found at 9–254 (KALLAQYGAP…ETEEDPKELA (246 aa)). Residues Lys-46, 53-55 (GRG), Glu-109, Ser-112, and Glu-117 contribute to the ATP site. Asn-209 and Asp-223 together coordinate Mg(2+). Substrate-binding positions include Asn-274 and 331-333 (GIM).

It belongs to the succinate/malate CoA ligase beta subunit family. Heterotetramer of two alpha and two beta subunits. Mg(2+) serves as cofactor.

The enzyme catalyses succinate + ATP + CoA = succinyl-CoA + ADP + phosphate. It catalyses the reaction GTP + succinate + CoA = succinyl-CoA + GDP + phosphate. Its pathway is carbohydrate metabolism; tricarboxylic acid cycle; succinate from succinyl-CoA (ligase route): step 1/1. Its function is as follows. Succinyl-CoA synthetase functions in the citric acid cycle (TCA), coupling the hydrolysis of succinyl-CoA to the synthesis of either ATP or GTP and thus represents the only step of substrate-level phosphorylation in the TCA. The beta subunit provides nucleotide specificity of the enzyme and binds the substrate succinate, while the binding sites for coenzyme A and phosphate are found in the alpha subunit. This chain is Succinate--CoA ligase [ADP-forming] subunit beta, found in Jannaschia sp. (strain CCS1).